The chain runs to 287 residues: 2-dehydro-3-deoxyphosphooctonate aldolase (287 aa).

This sequence belongs to the KdsA family.

The protein resides in the cytoplasm. It carries out the reaction D-arabinose 5-phosphate + phosphoenolpyruvate + H2O = 3-deoxy-alpha-D-manno-2-octulosonate-8-phosphate + phosphate. Its pathway is carbohydrate biosynthesis; 3-deoxy-D-manno-octulosonate biosynthesis; 3-deoxy-D-manno-octulosonate from D-ribulose 5-phosphate: step 2/3. It functions in the pathway bacterial outer membrane biogenesis; lipopolysaccharide biosynthesis. In Rhodopseudomonas palustris (strain ATCC BAA-98 / CGA009), this protein is 2-dehydro-3-deoxyphosphooctonate aldolase.